We begin with the raw amino-acid sequence, 318 residues long: Protease HtpX homolog (318 aa).

The next 3 membrane-spanning stretches (helical) occupy residues 1-21 (MLEAAGAVLLGSAALLMVGRL), 35-55 (ILGLLVGILSLALAALTGSAI), and 56-76 (AGLVVGVITAAMMYLFSSRIV). Histidine 167 provides a ligand contact to Zn(2+). Residue glutamate 168 is part of the active site. Histidine 171 provides a ligand contact to Zn(2+). The next 2 helical transmembrane spans lie at 178 to 198 (LVMTVAAAVSTAIAYAFDPWL) and 209 to 229 (IAFLVLAGMLASLISTLLVAA). Glutamate 235 contributes to the Zn(2+) binding site.

The protein belongs to the peptidase M48B family. The cofactor is Zn(2+).

The protein resides in the cell membrane. The chain is Protease HtpX homolog from Methanopyrus kandleri (strain AV19 / DSM 6324 / JCM 9639 / NBRC 100938).